The sequence spans 288 residues: Rhythmically expressed gene 5 protein (288 aa).

Expressed in head, but not in the body. Expression levels oscillate with the circadian rhythm.

Involved in the generation of biological rhythms (Potential). In the head, oscillates in abundance with a daily peak during early night, even under constant darkness. Oscillation is dependent on period (per) function. The polypeptide is Rhythmically expressed gene 5 protein (Reg-5) (Drosophila melanogaster (Fruit fly)).